Here is a 269-residue protein sequence, read N- to C-terminus: UPF0739 protein C1orf74 (269 aa).

The protein belongs to the UPF0739 family.

This chain is UPF0739 protein C1orf74 (C1orf74), found in Homo sapiens (Human).